The sequence spans 602 residues: Chaperone protein dnaK (602 aa).

Belongs to the heat shock protein 70 family.

It is found in the plastid. The protein resides in the chloroplast. Functionally, acts as a chaperone. This is Chaperone protein dnaK from Thalassiosira pseudonana (Marine diatom).